Here is a 343-residue protein sequence, read N- to C-terminus: Methylthioribose-1-phosphate isomerase (343 aa).

Substrate-binding positions include 48-50 (RGA), R88, and Q193. Residue D234 is the Proton donor of the active site. 244 to 245 (NK) serves as a coordination point for substrate.

This sequence belongs to the eIF-2B alpha/beta/delta subunits family. MtnA subfamily.

It carries out the reaction 5-(methylsulfanyl)-alpha-D-ribose 1-phosphate = 5-(methylsulfanyl)-D-ribulose 1-phosphate. It functions in the pathway amino-acid biosynthesis; L-methionine biosynthesis via salvage pathway; L-methionine from S-methyl-5-thio-alpha-D-ribose 1-phosphate: step 1/6. Functionally, catalyzes the interconversion of methylthioribose-1-phosphate (MTR-1-P) into methylthioribulose-1-phosphate (MTRu-1-P). The polypeptide is Methylthioribose-1-phosphate isomerase (Thermotoga neapolitana (strain ATCC 49049 / DSM 4359 / NBRC 107923 / NS-E)).